Reading from the N-terminus, the 207-residue chain is Ribosome maturation factor RimM (207 aa).

Residues Glu130–Tyr207 enclose the PRC barrel domain.

The protein belongs to the RimM family. As to quaternary structure, binds ribosomal protein uS19.

Its subcellular location is the cytoplasm. An accessory protein needed during the final step in the assembly of 30S ribosomal subunit, possibly for assembly of the head region. Essential for efficient processing of 16S rRNA. May be needed both before and after RbfA during the maturation of 16S rRNA. It has affinity for free ribosomal 30S subunits but not for 70S ribosomes. This chain is Ribosome maturation factor RimM, found in Cupriavidus taiwanensis (strain DSM 17343 / BCRC 17206 / CCUG 44338 / CIP 107171 / LMG 19424 / R1) (Ralstonia taiwanensis (strain LMG 19424)).